A 460-amino-acid chain; its full sequence is Elongation factor 1-alpha (460 aa).

Residue G2 is modified to N,N,N-trimethylglycine. The residue at position 3 (K3) is an N6,N6-dimethyllysine; alternate. N6-methyllysine; alternate is present on K3. The 236-residue stretch at K6–T241 folds into the tr-type G domain. Residues G15–S22 form a G1 region. G15–S22 is a GTP binding site. K31 bears the N6-methyllysine mark. Residues G71–D75 form a G2 region. K80 is modified (N6,N6,N6-trimethyllysine). The G3 stretch occupies residues D92–G95. GTP is bound by residues D92–H96 and N154–D157. The tract at residues N154–D157 is G4. Residues S193 to F195 form a G5 region. K317 is subject to N6,N6-dimethyllysine; alternate. Position 317 is an N6-methyllysine; alternate (K317). An N6-methyllysine modification is found at K391.

It belongs to the TRAFAC class translation factor GTPase superfamily. Classic translation factor GTPase family. EF-Tu/EF-1A subfamily.

The protein resides in the cytoplasm. Its function is as follows. This protein promotes the GTP-dependent binding of aminoacyl-tRNA to the A-site of ribosomes during protein biosynthesis. This chain is Elongation factor 1-alpha (TEF), found in Podospora anserina (Pleurage anserina).